We begin with the raw amino-acid sequence, 294 residues long: Eukaryotic translation initiation factor 3 subunit F (294 aa).

Residues 7–155 (VNVHPGVYMN…VRAYLRSKAG (149 aa)) enclose the MPN domain.

This sequence belongs to the eIF-3 subunit F family. As to quaternary structure, component of the eukaryotic translation initiation factor 3 (eIF-3) complex.

Its subcellular location is the cytoplasm. Its function is as follows. Component of the eukaryotic translation initiation factor 3 (eIF-3) complex, which is involved in protein synthesis of a specialized repertoire of mRNAs and, together with other initiation factors, stimulates binding of mRNA and methionyl-tRNAi to the 40S ribosome. The eIF-3 complex specifically targets and initiates translation of a subset of mRNAs involved in cell proliferation. This chain is Eukaryotic translation initiation factor 3 subunit F, found in Caenorhabditis elegans.